The primary structure comprises 2353 residues: C2 domain-containing protein 3 (2353 aa).

Residues 1–27 (MKQRKGQGSGGSRGRKKRGLSDISPST) are disordered. Ser-466 carries the post-translational modification Phosphoserine. Disordered stretches follow at residues 488–508 (KVLE…RNRN) and 549–568 (GVPP…AGPP). Residues 496-507 (KLKKRSAGKRNR) show a composition bias toward basic residues. The C2 1 domain maps to 521–678 (DAQTMTLSVD…IQSELLSFSD (158 aa)). Residue Ser-728 is modified to Phosphoserine. 4 consecutive C2 domains span residues 787–919 (SHNL…SRLL), 985–1147 (QPTA…HRED), 1171–1339 (SSGL…TGWY), and 1403–1533 (EPAT…TLTV). Residues 1569–1591 (HELDSMDCSSHSESEQLPRRNDE) are disordered. Positions 1617 to 1745 (TTAEVRLTQE…SGFQFVCGWY (129 aa)) constitute a C2 6 domain. Positions 1822-1846 (SKELDFSSPGRSDTTRSQASRHEEH) are disordered. Positions 1830–1839 (PGRSDTTRSQ) are enriched in polar residues. Ser-1891 is subject to Phosphoserine. Disordered regions lie at residues 1972–2032 (ALSS…NGGR), 2084–2118 (TSPW…PGPF), 2130–2269 (LSSP…QSLL), and 2301–2334 (PAAT…LNLP). Basic and acidic residues predominate over residues 2007 to 2016 (PLVRAPDKGT). The span at 2084–2098 (TSPWSSVISDTSEVI) shows a compositional bias: polar residues. A phosphoserine mark is found at Ser-2114 and Ser-2132. The span at 2181 to 2198 (SGAQQSSTFVGWSSPQTD) shows a compositional bias: polar residues. A compositionally biased stretch (basic and acidic residues) spans 2236-2253 (SRRENHKGPPIDSSDIRQ). A compositionally biased stretch (polar residues) spans 2254–2267 (RQVTTGSETSTKQS).

In terms of assembly, interacts with IFT88, BBS4 and PCM1. Interacts with OFD1; OFD1 may act as a negative regulator of C2CD3. Associates with the BBSome complex.

It is found in the cytoplasm. Its subcellular location is the cytoskeleton. The protein localises to the cilium basal body. The protein resides in the microtubule organizing center. It localises to the centrosome. It is found in the centriole. In terms of biological role, component of the centrioles that acts as a positive regulator of centriole elongation. Promotes assembly of centriolar distal appendage, a structure at the distal end of the mother centriole that acts as an anchor of the cilium, and is required for recruitment of centriolar distal appendages proteins CEP83, SCLT1, CEP89, FBF1 and CEP164. Not required for centriolar satellite integrity or RAB8 activation. Required for primary cilium formation. Required for sonic hedgehog/SHH signaling and for proteolytic processing of GLI3. This chain is C2 domain-containing protein 3 (C2CD3), found in Homo sapiens (Human).